The primary structure comprises 377 residues: Pulmonary surfactant-associated protein B (377 aa).

Residues 1–22 (MAKSHLLQWLLLLPTLCCPGAA) form the signal peptide. The propeptide occupies 23-191 (ITSASSLECA…PHTQDFSEQQ (169 aa)). The region spanning 24 to 64 (TSASSLECAQGPQFWCQSLEHAVQCRALGHCLQEVWGHAGA) is the Saposin A-type domain. Saposin B-type domains follow at residues 64-146 (ANDL…PRGQ), 195-272 (PLPF…STED), and 291-366 (QDTE…EAPA). Cystine bridges form between cysteine 68–cysteine 142, cysteine 71–cysteine 136, cysteine 99–cysteine 111, cysteine 199–cysteine 268, cysteine 202–cysteine 262, cysteine 226–cysteine 237, cysteine 295–cysteine 362, cysteine 298–cysteine 356, and cysteine 321–cysteine 331. The propeptide occupies 271–377 (EDAMGPALPA…PLQCFQTPHL (107 aa)). N-linked (GlcNAc...) asparagine glycosylation is present at asparagine 307.

Homodimer; disulfide-linked.

Its subcellular location is the secreted. The protein localises to the extracellular space. It localises to the surface film. Functionally, pulmonary surfactant-associated proteins promote alveolar stability by lowering the surface tension at the air-liquid interface in the peripheral air spaces. SP-B increases the collapse pressure of palmitic acid to nearly 70 millinewtons per meter. This is Pulmonary surfactant-associated protein B (Sftpb) from Mus musculus (Mouse).